Consider the following 573-residue polypeptide: MISNFILFALFIVTIALITKPLGSYIFRVFNNERTYLDWLAKPFQRVYLLVLGESSKKEQTAKAYFFSLVSFSVMAFIFVLVILLLQGILPLNPQEIKGMSFPQALNTAVSFITNTNWQSYSGETGVSYFAQMLALAVQNFVSAAVGLCVAIALIRSVARHETATIGNFWNDLGKGVFWILLPISIVIAIVYIFQGVPQNVMAYLHVHTLAGTEQIIPQGPIASQEAIKSLGTNGGGFFNANSAHPYENPTVITNYIQMVSIFAIAAALTYTFGKWVGNTKQGWLIFGVMLVLFIISLVVMTISELHGLDFLHSKDIQDIYGQVGHLSNMEGKESRFGVFYSTLYNTVSTSASDGGVNSVLDSYSPLAGMMAMLNMAIGEVIFGGVGAGFYGFFMFLMLAVFIGSLMIGRAPSFLGKRIEANDMKWTMFALLIFPCCVLVFTGLAAVIPSVHQTLTNSGAHGFSEILYAYISGANNNGSAFAGLSANTNYLNITIALSMLIGRFGVIFAVIMLAGSLVKKKRSLQMSEISSLDTTSFIFAILVFFTILLIGGLTIFPALGLGPILDQLNLNFL.

Transmembrane regions (helical) follow at residues 6 to 26 (ILFA…GSYI), 66 to 86 (FFSL…ILLL), 135 to 155 (ALAV…IALI), 177 to 197 (VFWI…FQGV), 257 to 277 (IQMV…GKWV), 283 to 303 (GWLI…VMTI), 382 to 402 (IFGG…LAVF), 428 to 448 (MFAL…AAVI), 493 to 513 (ITIA…VIML), and 537 to 557 (FIFA…TIFP).

The protein belongs to the KdpA family. As to quaternary structure, the system is composed of three essential subunits: KdpA, KdpB and KdpC.

It localises to the cell inner membrane. Its function is as follows. Part of the high-affinity ATP-driven potassium transport (or Kdp) system, which catalyzes the hydrolysis of ATP coupled with the electrogenic transport of potassium into the cytoplasm. This subunit binds the periplasmic potassium ions and delivers the ions to the membrane domain of KdpB through an intramembrane tunnel. The protein is Potassium-transporting ATPase potassium-binding subunit of Francisella tularensis subsp. holarctica (strain FTNF002-00 / FTA).